Reading from the N-terminus, the 21-residue chain is Glucan endo-1,3-beta-glucosidase 2 (21 aa).

A disordered region spans residues 1–21 (APGDLLWSDEFDGAAGSAPNP).

The enzyme catalyses Hydrolysis of (1-&gt;3)-beta-D-glucosidic linkages in (1-&gt;3)-beta-D-glucans.. The polypeptide is Glucan endo-1,3-beta-glucosidase 2 (Papiliotrema laurentii (Cryptococcus laurentii)).